Reading from the N-terminus, the 263-residue chain is 5'-nucleotidase SurE (263 aa).

A divalent metal cation contacts are provided by aspartate 8, aspartate 9, serine 43, and asparagine 96.

Belongs to the SurE nucleotidase family. A divalent metal cation is required as a cofactor.

Its subcellular location is the cytoplasm. It catalyses the reaction a ribonucleoside 5'-phosphate + H2O = a ribonucleoside + phosphate. In terms of biological role, nucleotidase that shows phosphatase activity on nucleoside 5'-monophosphates. This Jannaschia sp. (strain CCS1) protein is 5'-nucleotidase SurE.